A 561-amino-acid polypeptide reads, in one-letter code: Glutamine--tRNA ligase (561 aa).

The 'HIGH' region signature appears at 34-44; the sequence is PEPNGYLHIGH. Residues 35 to 37 and 41 to 47 each bind ATP; these read EPN and HIGHAKS. Residues aspartate 67 and tyrosine 212 each contribute to the L-glutamine site. ATP-binding positions include threonine 231, 261 to 262, and 269 to 271; these read RL and MSK. The 'KMSKS' region signature appears at 268-272; it reads VMSKR.

The protein belongs to the class-I aminoacyl-tRNA synthetase family. Monomer.

Its subcellular location is the cytoplasm. It carries out the reaction tRNA(Gln) + L-glutamine + ATP = L-glutaminyl-tRNA(Gln) + AMP + diphosphate. This is Glutamine--tRNA ligase from Idiomarina loihiensis (strain ATCC BAA-735 / DSM 15497 / L2-TR).